The following is a 1494-amino-acid chain: ABC multidrug transporter atrG (1494 aa).

Residues 1–11 (MSLLGTINPNL) show a composition bias toward polar residues. Disordered regions lie at residues 1–48 (MSLL…RTSD) and 84–105 (FSVS…TLNP). Residue asparagine 41 is glycosylated (N-linked (GlcNAc...) asparagine). Asparagine 141 and asparagine 340 each carry an N-linked (GlcNAc...) asparagine glycan. Residues 162-416 (LQVGALFRAV…FTTMGFECPE (255 aa)) form the ABC transporter 1 domain. 2 helical membrane-spanning segments follow: residues 527–547 (LTMS…SVFY) and 561–581 (ALLF…ILTL). The N-linked (GlcNAc...) asparagine glycan is linked to asparagine 622. A run of 3 helical transmembrane segments spans residues 636–656 (GPFF…SMLF), 669–689 (ALVP…FTIP), and 778–798 (GIMF…TEYI). N-linked (GlcNAc...) asparagine glycosylation occurs at asparagine 835. One can recognise an ABC transporter 2 domain in the interval 852 to 1095 (FHWQDVCYDI…LASYFERNGA (244 aa)). 888-895 (GVSGAGKT) lines the ATP pocket. A run of 5 helical transmembrane segments spans residues 1191–1211 (YIYS…FSFF), 1227–1247 (IFML…NFVT), 1276–1296 (LPWN…PIGL), 1312–1332 (LMWL…HMMI), and 1351–1371 (LCLI…FWIF). N-linked (GlcNAc...) asparagine glycans are attached at residues asparagine 1410 and asparagine 1432. The helical transmembrane segment at 1463 to 1483 (FGIMWAFIVFNIAAAVFIYWL) threads the bilayer.

The protein belongs to the ABC transporter superfamily. ABCG family. PDR (TC 3.A.1.205) subfamily.

The protein localises to the cell membrane. The enzyme catalyses (R)-miconazole(in) + ATP + H2O = (R)-miconazole(out) + ADP + phosphate + H(+). Pleiotropic ABC efflux transporter involved in the basal level of azole susceptibility. Confers resistance to miconazole and clotrimazole. The protein is ABC multidrug transporter atrG of Aspergillus oryzae (strain ATCC 42149 / RIB 40) (Yellow koji mold).